Consider the following 67-residue polypeptide: Large ribosomal subunit protein bL35 (67 aa).

Basic residues predominate over residues 1 to 16 (MPKMKTKSSAKKRFRV). A disordered region spans residues 1 to 24 (MPKMKTKSSAKKRFRVRPGGTVKR).

It belongs to the bacterial ribosomal protein bL35 family.

The polypeptide is Large ribosomal subunit protein bL35 (Verminephrobacter eiseniae (strain EF01-2)).